The sequence spans 33 residues: Brevinin-2DYa (33 aa).

A disulfide bridge connects residues C27 and C33.

In terms of tissue distribution, expressed by the skin glands.

The protein resides in the secreted. Its function is as follows. Antimicrobial peptide. The sequence is that of Brevinin-2DYa from Rana dybowskii (Dybovsky's frog).